The sequence spans 356 residues: Protein RecA (356 aa).

Position 67–74 (67–74 (GPESSGKT)) interacts with ATP.

Belongs to the RecA family.

It is found in the cytoplasm. Functionally, can catalyze the hydrolysis of ATP in the presence of single-stranded DNA, the ATP-dependent uptake of single-stranded DNA by duplex DNA, and the ATP-dependent hybridization of homologous single-stranded DNAs. It interacts with LexA causing its activation and leading to its autocatalytic cleavage. The polypeptide is Protein RecA (Yersinia pestis bv. Antiqua (strain Angola)).